We begin with the raw amino-acid sequence, 226 residues long: Ribonuclease 3 (226 aa).

An RNase III domain is found at 7-129 (LPRLCRTLSY…IIGAVYLDSD (123 aa)). E42 provides a ligand contact to Mg(2+). The active site involves D46. Mg(2+) is bound by residues D115 and E118. The active site involves E118. The DRBM domain maps to 156 to 226 (DAKTLLQEHL…AAQVLELLKK (71 aa)).

Belongs to the ribonuclease III family. As to quaternary structure, homodimer. Mg(2+) is required as a cofactor.

The protein resides in the cytoplasm. It carries out the reaction Endonucleolytic cleavage to 5'-phosphomonoester.. Functionally, digests double-stranded RNA. Involved in the processing of primary rRNA transcript to yield the immediate precursors to the large and small rRNAs (23S and 16S). Processes some mRNAs, and tRNAs when they are encoded in the rRNA operon. Processes pre-crRNA and tracrRNA of type II CRISPR loci if present in the organism. The chain is Ribonuclease 3 from Shewanella baltica (strain OS223).